A 297-amino-acid polypeptide reads, in one-letter code: Internalin C (297 aa).

The N-terminal stretch at 1–34 (MLKKNNWLQNAVIAMLVLIVGLCINMGSGTKVQA) is a signal peptide. LRR repeat units lie at residues 74–96 (LSGV…MQFF), 97–120 (TNLK…DLTK), 122–139 (EELS…GIPS), 140–161 (ACLS…LIHL), 162–184 (KNLE…GFLS), and 186–207 (LEVL…RLKK).

Belongs to the internalin family. As to quaternary structure, interacts in vitro with human intestinal mucin-2 (MUC2) but not with mucin-1; binding is slightly better at pH 5.5, (the pH of the intestine) than at pH 7.4. Interacts with the SH3 6 domain of human DNMBP (Tuba). Interacts with I-kappa-B kinase alpha (IKKA, CHUK).

It localises to the secreted. It is found in the host cytoplasm. In terms of biological role, a virulence enhancer that has at least 2 dissociable functions in infection; it impairs translocation of host transcription factor NF-kappa-B to the nucleus and antagonizes the function of the Tuba dynamin-binding protein, promoting bacterial spreading. Perturbs the morphology of host cell junctions by impairing host DNMBP (Tuba) and WASL interaction, altering cortical tension at the cell junctions and allowing bacteria to more efficiently form bacteria-filled cell protrusions which promote bacterial spreading within infected host tissue. Down-regulates the host inflammation response usually induced by Listeria infection. Interacts with host I-kappa-B kinase alpha (IKKA, CHUK), which prevents IKKA from phosphorylating NF-kappa-B inhibitor alpha (IKBA, NFKBIA) and thus delays degradation of phospho-IKBA. Translocation of host transcription factor p65 (a subunit of NF-kappa-B, RELA) into the nucleus is impaired, which prevents activation of NF-KB-regulated genes. Recognized by serum from healthy humans exposed to L.monocytogenes as well from patients who have recovered from listeriosis. This Listeria monocytogenes serotype 1/2a (strain EGD / Mackaness) protein is Internalin C.